The following is a 377-amino-acid chain: MRVPVAVDDLVAPSTMGERHTVIDRGTSVAAVHTALPPHRYAQSDLTELIADLCLEPGADRALLRRLHTSAGVRTRHLALPIEQYAGLGDFGQANAAWLTVGLALAEEALSGALDAAGLTAADIDLLVCTSITGVAAPSLDARLAVRMGMRADVKRVPVFGLGCVGGAAGLGRLHDYLLGHPDDTAVLLSVELCSLTLQRDGSLANLVAGALFGDGAAAVVARGGDAGRRGAGWPMVAATRGHLYPDTEHLLGWRIGASGFRVVVDAGIPDVVRTHLGGDLRNFLATHGLVPDDIGTWICHPGGPKVLAAVGDALELPDGALDSSWRSLAGVGNLSSASVLRVLEDVATRCRPDPGTWGVLLAMGPGFCAEFVLLRW.

Residue Cys-164 is part of the active site.

It belongs to the thiolase-like superfamily. Chalcone/stilbene synthases family. As to quaternary structure, homodimer.

It catalyses the reaction 5 malonyl-CoA + 5 H(+) = naphthalene-1,3,6,8-tetrol + 5 CO2 + 5 CoA + H2O. The protein operates within pigment biosynthesis; melanin biosynthesis. Involved in the biosynthesis of melanin but also various secondary metabolites containing a naphthoquinone ring. Catalyzes the iterative condensation of five CoA-linked malonyl units to form a pentaketide intermediate. THNS subsequently catalyzes the dual intramolecular Claisen and aldol condensations of this linear intermediate to produce the fused ring of 1,3,6,8-tetrahydroxynaphthalene (THN). This chain is 1,3,6,8-tetrahydroxynaphthalene synthase, found in Streptomyces peucetius subsp. caesius.